Here is an 842-residue protein sequence, read N- to C-terminus: MLHFLFHSGSSSNRNSSPKESYELLHGLDKQYQSTKDVTFRLVLVQDIGDRKKTVLFDSNHVDGQKGDSVLRDSANAPLTDLMFGAIPISHKGTTTKLHILHPPNPATRSYMLTQLFQINTHGTVVNSSHETIASATSLFENSSSNFSEDPNKPNSSDAFESNKEDSPLLKSFNDSAIPENAANLSSSSKNMKDSTLSSQKARSNTSSSFLTPLHEQLESRCALHTAAKDPFRSKNSLRCNRGHSPLSSQQILPAISNNTSEKPDSNNCGFLLPSNSTSIKDLKNVKKGNRLNSPPFITIPQSIKNTNSNFLLSSPSLFSDTRTRPASYALALIITVPYEYDEIVHPVSTYYTMLSNFTLSLQKEIDERIRNLLFVSLSSGGDNKNDTGIPLIQSSSSKVGFGPYALSKDLITAKSFHKCILLLKTGFSAPLIKPSVFSGSKWVENMRLLTDLCKSPAQKCLFSNLLTATRKFCLERQKDDVTFKVLLQSSKAPIARRFLYLLAPLMRPSIAQCSDTLLNPIQLYPNSGILSSSSLSTSFGCPSVSGSLRVPSYDMKINDSCKAIDIHSEKPSFADSPRKTSLRNYLSSSWRLKFMRSSYQNNETDPLNPTSGSFLRQPMQYSSPSGVSESAASSFLDIENIDEYLESAENMKYLPRSTVGPGGMLHVDLLETNAKQESEATTSTVPPSPSQVGFLKALHPSFDLQAAPPNSYVSFSDDDFISATLLYMLEDVSRNKSQLLAEKKHLKSQLMVANLDTYSLDCYEIHEFPSEWENDYAPFLLKEHHKVIGETYVSSFDIQQGCFNVIKRRLSSYKWDKSDDSFVSEVLKGDLKEVLRVCSHC.

Disordered regions lie at residues 1 to 20 and 142 to 209; these read MLHF…SPKE and NSSS…TSSS. The region spanning 35-422 is the uDENN FNIP1/2-type domain; it reads TKDVTFRLVL…TAKSFHKCIL (388 aa). Residues 183–209 are compositionally biased toward polar residues; that stretch reads ANLSSSSKNMKDSTLSSQKARSNTSSS. In terms of domain architecture, cDENN FNIP1/2-type spans 430-772; the sequence is APLIKPSVFS…CYEIHEFPSE (343 aa). Ser573 and Ser590 each carry phosphoserine. The dDENN FNIP1/2-type domain maps to 777–842; that stretch reads YAPFLLKEHH…KEVLRVCSHC (66 aa).

The protein resides in the cytoplasm. This is an uncharacterized protein from Schizosaccharomyces pombe (strain 972 / ATCC 24843) (Fission yeast).